A 400-amino-acid chain; its full sequence is Probable RNA polymerase sigma factor RfaY (400 aa).

The Polymerase core binding signature appears at 62–75 (WQRLAQLHQPASFL). A DNA-binding region (H-T-H motif) is located at residues 165-184 (SDAAVRKRLSRARATVRNEL).

This sequence belongs to the sigma-70 factor family. ECF subfamily.

Functionally, sigma factors are initiation factors that promote the attachment of RNA polymerase to specific initiation sites and are then released. This sigma factor is involved in lipopolysaccharide biosynthesis and pathogenicity. The sequence is that of Probable RNA polymerase sigma factor RfaY (rfaY) from Xanthomonas campestris pv. campestris (strain ATCC 33913 / DSM 3586 / NCPPB 528 / LMG 568 / P 25).